Here is a 75-residue protein sequence, read N- to C-terminus: UPF0352 protein YejL (75 aa).

This sequence belongs to the UPF0352 family.

The chain is UPF0352 protein YejL from Escherichia coli O139:H28 (strain E24377A / ETEC).